A 549-amino-acid polypeptide reads, in one-letter code: Oxygen-dependent choline dehydrogenase (549 aa).

Position 4–33 (4–33 (DFVIIGSGSAGSAMASRLSEDGKHTVIVLE)) interacts with FAD. Catalysis depends on histidine 465, which acts as the Proton acceptor.

Belongs to the GMC oxidoreductase family. FAD serves as cofactor.

The enzyme catalyses choline + A = betaine aldehyde + AH2. It catalyses the reaction betaine aldehyde + NAD(+) + H2O = glycine betaine + NADH + 2 H(+). The protein operates within amine and polyamine biosynthesis; betaine biosynthesis via choline pathway; betaine aldehyde from choline (cytochrome c reductase route): step 1/1. Its function is as follows. Involved in the biosynthesis of the osmoprotectant glycine betaine. Catalyzes the oxidation of choline to betaine aldehyde and betaine aldehyde to glycine betaine at the same rate. This Rhizobium rhizogenes (strain K84 / ATCC BAA-868) (Agrobacterium radiobacter) protein is Oxygen-dependent choline dehydrogenase.